A 351-amino-acid polypeptide reads, in one-letter code: Protein pelota homolog (351 aa).

Belongs to the eukaryotic release factor 1 family. Pelota subfamily. Monomer. It depends on a divalent metal cation as a cofactor.

It is found in the cytoplasm. Its function is as follows. May function in recognizing stalled ribosomes, interact with stem-loop structures in stalled mRNA molecules, and effect endonucleolytic cleavage of the mRNA. May play a role in the release non-functional ribosomes and degradation of damaged mRNAs. Has endoribonuclease activity. The sequence is that of Protein pelota homolog from Methanosphaera stadtmanae (strain ATCC 43021 / DSM 3091 / JCM 11832 / MCB-3).